The primary structure comprises 418 residues: MTNSIEQAWDLAKQRFAAVGVDVDAALTRLDTLPVSMHCWQGDDVTGFEDPDGVLTGGIQATGNYPGKARNATELRSDLELALALIPGPKRLNLHAIYLESDTPVARNKIEPRHFSHWVAWAKKHQLGLDFNPSCFSHPLSADGFTLSHADPEIRQFWIEHCQASRRISAYFGEQLGTPSVMNIWIPDGMKDTPIDRLAPRQRLLSALDEVISEKLNPAHHIDAVESKLFGIGAESYTVGSNEFYMGYAASRQTALCLDAGHFHPTEVISDKISSAMLYVPRLLLHVSRPVRWDSDHVVLLDDETQAIASEIIRHNLFDRVHIGLDFFDASINRIAAWVIGTRNMKKALLRALLEPTDRLRQLELRGDYTARLALLEEQKSLPWQAIWEGYCQRNDVPVDARWLDAVREYEQQILSQR.

H262, D294, and D296 together coordinate Mn(2+).

It belongs to the rhamnose isomerase family. Homotetramer. Mn(2+) is required as a cofactor.

It is found in the cytoplasm. The enzyme catalyses L-rhamnopyranose = L-rhamnulose. Its pathway is carbohydrate degradation; L-rhamnose degradation; glycerone phosphate from L-rhamnose: step 1/3. Catalyzes the interconversion of L-rhamnose and L-rhamnulose. The polypeptide is L-rhamnose isomerase (Yersinia pseudotuberculosis serotype O:1b (strain IP 31758)).